Reading from the N-terminus, the 188-residue chain is Elongation factor P (188 aa).

It belongs to the elongation factor P family.

It localises to the cytoplasm. The protein operates within protein biosynthesis; polypeptide chain elongation. Functionally, involved in peptide bond synthesis. Stimulates efficient translation and peptide-bond synthesis on native or reconstituted 70S ribosomes in vitro. Probably functions indirectly by altering the affinity of the ribosome for aminoacyl-tRNA, thus increasing their reactivity as acceptors for peptidyl transferase. This Phytoplasma mali (strain AT) protein is Elongation factor P.